Reading from the N-terminus, the 857-residue chain is RNA-directed RNA polymerase 2a (857 aa).

Residues 511–624 form the RdRp catalytic domain; the sequence is KHCLEIDLSK…FSLLPPVGDP (114 aa). Positions 780–789 are enriched in basic and acidic residues; it reads IERRCNDKRR. Residues 780 to 827 form a disordered region; it reads IERRCNDKRRTPTGSYGGGEEAETKVSQTESTGTRSQKSQRESAFKSQ. Residues 804–816 are compositionally biased toward polar residues; sequence KVSQTESTGTRSQ.

The protein belongs to the ssRNA positive-strand viruses RNA-directed RNA polymerase family. In terms of assembly, interacts with replication protein 1a.

The enzyme catalyses RNA(n) + a ribonucleoside 5'-triphosphate = RNA(n+1) + diphosphate. RNA-dependent RNA polymerase which replicates the viral genome composed of 3 RNA segments, RNA1, RNA2 and RNA3. In Cucumber mosaic virus (strain FNY) (CMV), this protein is RNA-directed RNA polymerase 2a.